The following is a 626-amino-acid chain: MARTAPAASFESLESDLDQKFAYPASSKTYLTGSRPDIRVPLRTILQTSTRTDKGEMQNPPIPVYDTSGPYSDPDVHIDLKAGLPAVRAKWIEERGDTEVLPGLSSEYGRDRANDPATAHLRFAQLTNPRRAKAGANVSQMHYARKGIITPEMEYVALRESLNLQALYDKPDYKALLRQHPGNALGAGLPLRPEDITPEFVRQEIASGRAIIPANINHTELEPMAIGRNFRVKINGNLGNSAVTSSLAEEVEKMVWSIRWGADTIMDLSTGKHIHETREWILRNSPVPIGTVPIYQALDKTGGIAEDLTWEMFRDTLIEQAEQGVDYFTIHAGVLLRYVPLTADRVTGIVSRGGSIMAKWCLAHHKENFLYTHFDEICEIMKAYDVSFSLGDGLRPGCIADSNDDAQFGELRTLGELTAKAWKHDVQVMIEGPGHVPLQRIQANMDEELKHCYEAPFYTLGPLVTDIAPGYDHITSGIGAANIGWMGTAMLCYVTPKEHLGLPDKEDVREGIITYKIAAHAADLAKGWPGAQLRDNALSKARFEFRWEDQFNLGLDPERARSYHDATLPAEGAKIAHFCSMCGPKFCSMKITQEVRDYAASLPKEAQQGMEEKSIEFLKKGSKIYS.

Substrate-binding positions include Asn-237, Met-266, Tyr-295, His-331, 351–353 (SRG), 392–395 (DGLR), and Glu-431. A Zn(2+)-binding site is contributed by His-435. Substrate is bound at residue Tyr-458. His-499 is a Zn(2+) binding site. 3 residues coordinate [4Fe-4S] cluster: Cys-579, Cys-582, and Cys-587.

Belongs to the ThiC family. As to quaternary structure, homodimer. [4Fe-4S] cluster is required as a cofactor.

The enzyme catalyses 5-amino-1-(5-phospho-beta-D-ribosyl)imidazole + S-adenosyl-L-methionine = 4-amino-2-methyl-5-(phosphooxymethyl)pyrimidine + CO + 5'-deoxyadenosine + formate + L-methionine + 3 H(+). It participates in cofactor biosynthesis; thiamine diphosphate biosynthesis. Its function is as follows. Catalyzes the synthesis of the hydroxymethylpyrimidine phosphate (HMP-P) moiety of thiamine from aminoimidazole ribotide (AIR) in a radical S-adenosyl-L-methionine (SAM)-dependent reaction. This is Phosphomethylpyrimidine synthase from Cupriavidus necator (strain ATCC 17699 / DSM 428 / KCTC 22496 / NCIMB 10442 / H16 / Stanier 337) (Ralstonia eutropha).